We begin with the raw amino-acid sequence, 475 residues long: tRNA-2-methylthio-N(6)-dimethylallyladenosine synthase (475 aa).

The disordered stretch occupies residues 1 to 20; sequence MEQNLTTERSETSSSRAGTA. Residues 25–145 enclose the MTTase N-terminal domain; that stretch reads KKVFVKTYGC…LPSVVTRARA (121 aa). Residues Cys-34, Cys-70, Cys-108, Cys-186, Cys-190, and Cys-193 each contribute to the [4Fe-4S] cluster site. In terms of domain architecture, Radical SAM core spans 172-404; sequence RSRGVTAFLT…QALLAEQQRA (233 aa). One can recognise a TRAM domain in the interval 407–469; it reads ESLVGTEIDL…GHSLFCEPAG (63 aa).

This sequence belongs to the methylthiotransferase family. MiaB subfamily. As to quaternary structure, monomer. Requires [4Fe-4S] cluster as cofactor.

The protein localises to the cytoplasm. It carries out the reaction N(6)-dimethylallyladenosine(37) in tRNA + (sulfur carrier)-SH + AH2 + 2 S-adenosyl-L-methionine = 2-methylsulfanyl-N(6)-dimethylallyladenosine(37) in tRNA + (sulfur carrier)-H + 5'-deoxyadenosine + L-methionine + A + S-adenosyl-L-homocysteine + 2 H(+). Catalyzes the methylthiolation of N6-(dimethylallyl)adenosine (i(6)A), leading to the formation of 2-methylthio-N6-(dimethylallyl)adenosine (ms(2)i(6)A) at position 37 in tRNAs that read codons beginning with uridine. The protein is tRNA-2-methylthio-N(6)-dimethylallyladenosine synthase of Chelativorans sp. (strain BNC1).